The chain runs to 468 residues: ATP synthase subunit beta (468 aa).

Position 155–162 (155–162 (GGAGVGKT)) interacts with ATP.

Belongs to the ATPase alpha/beta chains family. As to quaternary structure, F-type ATPases have 2 components, CF(1) - the catalytic core - and CF(0) - the membrane proton channel. CF(1) has five subunits: alpha(3), beta(3), gamma(1), delta(1), epsilon(1). CF(0) has three main subunits: a(1), b(2) and c(9-12). The alpha and beta chains form an alternating ring which encloses part of the gamma chain. CF(1) is attached to CF(0) by a central stalk formed by the gamma and epsilon chains, while a peripheral stalk is formed by the delta and b chains.

It is found in the cell membrane. The enzyme catalyses ATP + H2O + 4 H(+)(in) = ADP + phosphate + 5 H(+)(out). Produces ATP from ADP in the presence of a proton gradient across the membrane. The catalytic sites are hosted primarily by the beta subunits. In Streptococcus equi subsp. zooepidemicus (strain H70), this protein is ATP synthase subunit beta.